Reading from the N-terminus, the 117-residue chain is Large ribosomal subunit protein uL18 (117 aa).

The protein belongs to the universal ribosomal protein uL18 family. In terms of assembly, part of the 50S ribosomal subunit; part of the 5S rRNA/L5/L18/L25 subcomplex. Contacts the 5S and 23S rRNAs.

This is one of the proteins that bind and probably mediate the attachment of the 5S RNA into the large ribosomal subunit, where it forms part of the central protuberance. The chain is Large ribosomal subunit protein uL18 from Haemophilus influenzae (strain 86-028NP).